The following is a 119-amino-acid chain: U-scoloptoxin(01)-Cw1a (119 aa).

An N-terminal signal peptide occupies residues 1 to 22 (MSKATNFYLFVLLGVFVALVRT). Positions 38–96 (SFSCDGKKPGYYADQQMECQVYHVCTPDNEHAVLLCGPGTIFNQKHLVCDFPSNYACAD) constitute a Chitin-binding type-2 domain. Cys-73 and Cys-86 are joined by a disulfide.

It belongs to the scoloptoxin-01 family. In terms of processing, contains 3 disulfide bonds. Expressed by the venom gland.

The protein localises to the secreted. The polypeptide is U-scoloptoxin(01)-Cw1a (Cormocephalus westwoodi (Westwood's green centipede)).